We begin with the raw amino-acid sequence, 426 residues long: 6-Hydroxy-7-prenyldeoxybrevianamide E synthase notC (426 aa).

Position 94 (E94) interacts with substrate. Residues R105, K191, and Y193 each coordinate dimethylallyl diphosphate. Substrate is bound at residue Y195. Residues K267, Y269, Q352, Y354, Y418, and Y422 each coordinate dimethylallyl diphosphate.

The protein belongs to the tryptophan dimethylallyltransferase family.

The catalysed reaction is 6-hydroxydeoxybrevianamide E + dimethylallyl diphosphate = notoamide S + diphosphate. It participates in alkaloid biosynthesis. Addition of 5 mM Mg(2+), Ca(2+) or Mn(2+) slightly enhances catalysis (about 100-120%). Significant reduction of enzyme activity (2%-35%) is observed with Cu(2+), Zn(2+), Fe(2+), or Sn(2+) (5 mM). In terms of biological role, prenyltransferase; part of the gene cluster that mediates the biosynthesis of notoamide, a fungal indole alkaloid that belongs to a family of natural products containing a characteristic bicyclo[2.2.2]diazaoctane core. The first step of notoamide biosynthesis involves coupling of L-proline and L-tryptophan by the bimodular NRPS notE, to produce cyclo-L-tryptophan-L-proline called brevianamide F. The reverse prenyltransferase notF then acts as a deoxybrevianamide E synthase and converts brevianamide F to deoxybrevianamide E via reverse prenylation at C-2 of the indole ring leading to the bicyclo[2.2.2]diazaoctane core. Deoxybrevianamide E is further hydroxylated at C-6 of the indole ring, likely catalyzed by the cytochrome P450 monooxygenase notG, to yield 6-hydroxy-deoxybrevianamide E. 6-hydroxy-deoxybrevianamide E is a specific substrate of the prenyltransferase notC for normal prenylation at C-7 to produce 6-hydroxy-7-prenyl-deoxybrevianamide, also called notoamide S. As the proposed pivotal branching point in notoamide biosynthesis, notoamide S can be diverted to notoamide E through an oxidative pyran ring closure putatively catalyzed by either notH cytochrome P450 monooxygenase or the notD FAD-linked oxidoreductase. This step would be followed by an indole 2,3-epoxidation-initiated pinacol-like rearrangement catalyzed by the notB FAD-dependent monooxygenase leading to the formation of notoamide C and notoamide D. On the other hand notoamide S is converted to notoamide T by notH (or notD), a bifunctional oxidase that also functions as the intramolecular Diels-Alderase responsible for generation of (+)-notoamide T. To generate antipodal (-)-notoaminide T, notH' (or notD') in Aspergillus versicolor is expected to catalyze a Diels-Alder reaction leading to the opposite stereochemistry. The remaining oxidoreductase notD (or notH) likely catalyzes the oxidative pyran ring formation to yield (+)-stephacidin A. The FAD-dependent monooxygenase notI is highly similar to notB and is predicted to catalyze a similar conversion from (+)-stephacidin A to (-)-notoamide B via the 2,3-epoxidation of (+)-stephacidin A followed by a pinacol-type rearrangement. Finally, it remains unclear which enzyme could be responsible for the final hydroxylation steps leading to notoamide A and sclerotiamide. This chain is 6-Hydroxy-7-prenyldeoxybrevianamide E synthase notC, found in Aspergillus sp. (strain MF297-2).